Reading from the N-terminus, the 328-residue chain is Homeobox protein Hox-D1 (328 aa).

The short motif at 204-209 is the Antp-type hexapeptide element; it reads TFEWMK. The segment at residues 229–288 is a DNA-binding region (homeobox); it reads SSAIRTNFSTKQLTELEKEFHFNKYLTRARRIEIANCLHLNDTQVKIWFQNRRMKQKKRE. Residues 305 to 328 form a disordered region; sequence PLSGTTPTKFIKNPGSPSQSQEPS. Residues 319-328 show a composition bias toward polar residues; sequence GSPSQSQEPS.

It belongs to the Antp homeobox family. Labial subfamily.

It is found in the nucleus. In terms of biological role, sequence-specific transcription factor which is part of a developmental regulatory system that provides cells with specific positional identities on the anterior-posterior axis. Acts on the anterior body structures. This chain is Homeobox protein Hox-D1 (HOXD1), found in Homo sapiens (Human).